The following is a 596-amino-acid chain: Membrane protein insertase YidC (596 aa).

Helical transmembrane passes span 4–24 (NKLI…HFFD), 332–352 (LGWP…FSFI), 359–379 (YGLV…PLSY), 425–445 (LSGC…FNFF), 468–488 (IINL…FTLL), and 518–538 (PITF…YYFV). The segment covering 565–584 (KNKEKSANNKEGSFKKRFQD) has biased composition (basic and acidic residues). Residues 565 to 596 (KNKEKSANNKEGSFKKRFQDAIKASASHKGKK) are disordered.

It belongs to the OXA1/ALB3/YidC family. Type 1 subfamily. As to quaternary structure, interacts with the Sec translocase complex via SecD. Specifically interacts with transmembrane segments of nascent integral membrane proteins during membrane integration.

The protein localises to the cell inner membrane. Required for the insertion and/or proper folding and/or complex formation of integral membrane proteins into the membrane. Involved in integration of membrane proteins that insert both dependently and independently of the Sec translocase complex, as well as at least some lipoproteins. Aids folding of multispanning membrane proteins. This Amoebophilus asiaticus (strain 5a2) protein is Membrane protein insertase YidC.